Here is a 273-residue protein sequence, read N- to C-terminus: uncharacterized protein (273 aa).

2 helical membrane passes run 24-44 (VGVSAIDGLIAAVVAGPVTIL) and 103-123 (IVGPWAIGFSLGLSLGGEAWA). The tract at residues 132–194 (SDLPHHGRQS…QPPAQTQPYR (63 aa)) is disordered. Residues 164–179 (SSHHIRSPAVARHHKT) are compositionally biased toward basic residues. The segment covering 183-192 (TTQPPAQTQP) has biased composition (low complexity).

The protein resides in the cell membrane. This is an uncharacterized protein from Sinorhizobium fredii (strain NBRC 101917 / NGR234).